We begin with the raw amino-acid sequence, 435 residues long: Serine--tRNA ligase (435 aa).

T240 to E242 contributes to the L-serine binding site. R271 to E273 is an ATP binding site. Residue E294 participates in L-serine binding. E358 to S361 is an ATP binding site. S393 is an L-serine binding site.

Belongs to the class-II aminoacyl-tRNA synthetase family. Type-1 seryl-tRNA synthetase subfamily. In terms of assembly, homodimer. The tRNA molecule binds across the dimer.

Its subcellular location is the cytoplasm. The enzyme catalyses tRNA(Ser) + L-serine + ATP = L-seryl-tRNA(Ser) + AMP + diphosphate + H(+). It carries out the reaction tRNA(Sec) + L-serine + ATP = L-seryl-tRNA(Sec) + AMP + diphosphate + H(+). Its pathway is aminoacyl-tRNA biosynthesis; selenocysteinyl-tRNA(Sec) biosynthesis; L-seryl-tRNA(Sec) from L-serine and tRNA(Sec): step 1/1. Functionally, catalyzes the attachment of serine to tRNA(Ser). Is also able to aminoacylate tRNA(Sec) with serine, to form the misacylated tRNA L-seryl-tRNA(Sec), which will be further converted into selenocysteinyl-tRNA(Sec). The chain is Serine--tRNA ligase from Cupriavidus metallidurans (strain ATCC 43123 / DSM 2839 / NBRC 102507 / CH34) (Ralstonia metallidurans).